The chain runs to 404 residues: Cysteine desulfurase IscS (404 aa).

Pyridoxal 5'-phosphate contacts are provided by residues 75 to 76 (AT), Asn155, Gln183, and 203 to 205 (SAH). Lys206 carries the N6-(pyridoxal phosphate)lysine modification. Thr243 lines the pyridoxal 5'-phosphate pocket. Cys328 functions as the Cysteine persulfide intermediate in the catalytic mechanism. Cys328 provides a ligand contact to [2Fe-2S] cluster.

The protein belongs to the class-V pyridoxal-phosphate-dependent aminotransferase family. NifS/IscS subfamily. Homodimer. Forms a heterotetramer with IscU, interacts with other sulfur acceptors. Pyridoxal 5'-phosphate serves as cofactor.

Its subcellular location is the cytoplasm. The catalysed reaction is (sulfur carrier)-H + L-cysteine = (sulfur carrier)-SH + L-alanine. Its pathway is cofactor biosynthesis; iron-sulfur cluster biosynthesis. In terms of biological role, master enzyme that delivers sulfur to a number of partners involved in Fe-S cluster assembly, tRNA modification or cofactor biosynthesis. Catalyzes the removal of elemental sulfur atoms from cysteine to produce alanine. Functions as a sulfur delivery protein for Fe-S cluster synthesis onto IscU, an Fe-S scaffold assembly protein, as well as other S acceptor proteins. The protein is Cysteine desulfurase IscS of Buchnera aphidicola subsp. Baizongia pistaciae (strain Bp).